We begin with the raw amino-acid sequence, 103 residues long: MAAVSLSVSTVKPLGDRVFVKVSESEEKTAGGILLPDTAKEKPQVGEVVQVGPGKANEDGSRQAPEVGVGDKVLYSKYAGTDIKLGSDEYVLLSEKDILAVVN.

This sequence belongs to the GroES chaperonin family. In terms of assembly, heptamer of 7 subunits arranged in a ring. Interacts with the chaperonin GroEL.

Its subcellular location is the cytoplasm. Together with the chaperonin GroEL, plays an essential role in assisting protein folding. The GroEL-GroES system forms a nano-cage that allows encapsulation of the non-native substrate proteins and provides a physical environment optimized to promote and accelerate protein folding. GroES binds to the apical surface of the GroEL ring, thereby capping the opening of the GroEL channel. This chain is Co-chaperonin GroES, found in Synechococcus sp. (strain WH7803).